The primary structure comprises 680 residues: NADPH--cytochrome P450 reductase (680 aa).

The Lumenal portion of the chain corresponds to Met-1–Lys-5. Residues Leu-6–Ala-23 form a helical membrane-spanning segment. Residues Lys-24 to Trp-680 lie on the Cytoplasmic side of the membrane. A Flavodoxin-like domain is found at Thr-60–Phe-204. Residues Ser-66–Ala-71, Ala-117–Gly-120, Leu-152–Asn-161, and Asp-187 each bind FMN. One can recognise an FAD-binding FR-type domain in the interval Thr-264 to Phe-509. Arg-283 contacts NADP(+). Residues Arg-439 to Ser-442, Thr-457 to Val-459, and Gly-473 to Thr-476 each bind FAD. Residues Thr-537, Ser-599–Arg-600, Lys-606–Gln-610, and Asp-642 contribute to the NADP(+) site. Trp-680 provides a ligand contact to FAD.

It belongs to the NADPH--cytochrome P450 reductase family. This sequence in the N-terminal section; belongs to the flavodoxin family. The protein in the C-terminal section; belongs to the flavoprotein pyridine nucleotide cytochrome reductase family. Requires FAD as cofactor. The cofactor is FMN.

The protein localises to the endoplasmic reticulum membrane. It is found in the mitochondrion outer membrane. Its subcellular location is the cell membrane. It carries out the reaction 2 oxidized [cytochrome P450] + NADPH = 2 reduced [cytochrome P450] + NADP(+) + H(+). In terms of biological role, this enzyme is required for electron transfer from NADP to cytochrome P450 in microsomes. It can also provide electron transfer to heme oxygenase and cytochrome B5. Involved in ergosterol biosynthesis. The sequence is that of NADPH--cytochrome P450 reductase from Candida maltosa (Yeast).